Consider the following 187-residue polypeptide: Pyridoxal 5'-phosphate synthase subunit PdxT (187 aa).

47 to 49 (GES) provides a ligand contact to L-glutamine. Residue C76 is the Nucleophile of the active site. L-glutamine contacts are provided by residues R102 and 128–129 (IR). Catalysis depends on charge relay system residues H165 and E167.

Belongs to the glutaminase PdxT/SNO family. In the presence of PdxS, forms a dodecamer of heterodimers. Only shows activity in the heterodimer.

The enzyme catalyses aldehydo-D-ribose 5-phosphate + D-glyceraldehyde 3-phosphate + L-glutamine = pyridoxal 5'-phosphate + L-glutamate + phosphate + 3 H2O + H(+). The catalysed reaction is L-glutamine + H2O = L-glutamate + NH4(+). It functions in the pathway cofactor biosynthesis; pyridoxal 5'-phosphate biosynthesis. Catalyzes the hydrolysis of glutamine to glutamate and ammonia as part of the biosynthesis of pyridoxal 5'-phosphate. The resulting ammonia molecule is channeled to the active site of PdxS. The sequence is that of Pyridoxal 5'-phosphate synthase subunit PdxT from Methanococcus maripaludis (strain C7 / ATCC BAA-1331).